We begin with the raw amino-acid sequence, 280 residues long: Ycf3-interacting protein 1, chloroplastic (280 aa).

Residues 1 to 62 (MTTQIFQLPL…NNRRFGSLIV (62 aa)) constitute a chloroplast transit peptide. A disordered region spans residues 75–103 (PVPLTLEQQEKEKQNRDDEEDEIDEGDVD). Over residues 91–103 (DDEEDEIDEGDVD) the composition is skewed to acidic residues. A helical membrane pass occupies residues 255–275 (ALYFVSALPVIIGISVVLILF).

Belongs to the Y3IP1/CEST family. As to quaternary structure, interacts with Ycf3. Expressed in cotyledons, rosette and cauline leaves, stems and sepals.

It is found in the plastid. The protein resides in the chloroplast thylakoid membrane. Its function is as follows. Nuclear genome-encoded factor that participates in photosystem I (PSI) biogenesis. Cooperates with the plastid genome-encoded protein PSI assembly Ycf3 in the assembly of stable PSI units in the thylakoid membrane. Involved in light-induced chloroplast development and growth. Involved in the plant response to abiotic and photooxidative stresses. May be involved in the suppression of photooxidative damage. In Arabidopsis thaliana (Mouse-ear cress), this protein is Ycf3-interacting protein 1, chloroplastic.